Reading from the N-terminus, the 282-residue chain is Pantothenate synthetase (282 aa).

An ATP-binding site is contributed by 30-37 (MGNLHLGH). The active-site Proton donor is the His-37. A (R)-pantoate-binding site is contributed by Gln-61. Gln-61 lines the beta-alanine pocket. 149-152 (GQKD) contacts ATP. Gln-155 lines the (R)-pantoate pocket. ATP-binding positions include Ile-178 and 186–189 (MSSR).

The protein belongs to the pantothenate synthetase family. As to quaternary structure, homodimer.

Its subcellular location is the cytoplasm. The enzyme catalyses (R)-pantoate + beta-alanine + ATP = (R)-pantothenate + AMP + diphosphate + H(+). It functions in the pathway cofactor biosynthesis; (R)-pantothenate biosynthesis; (R)-pantothenate from (R)-pantoate and beta-alanine: step 1/1. Catalyzes the condensation of pantoate with beta-alanine in an ATP-dependent reaction via a pantoyl-adenylate intermediate. The polypeptide is Pantothenate synthetase (Shewanella piezotolerans (strain WP3 / JCM 13877)).